We begin with the raw amino-acid sequence, 117 residues long: uncharacterized protein (117 aa).

Residues 1-19 (MTSNPSSSADQPLSGTTVP) show a composition bias toward polar residues. Residues 1–28 (MTSNPSSSADQPLSGTTVPGSVPGKAPE) are disordered. 2 helical membrane-spanning segments follow: residues 38–58 (AAVWSALIVGFLILILLLIFI) and 76–96 (LPLGVAILLAAVGGGLITVFA).

Its subcellular location is the cell membrane. This is an uncharacterized protein from Mycobacterium tuberculosis (strain ATCC 25618 / H37Rv).